A 722-amino-acid polypeptide reads, in one-letter code: Serine/threonine-protein kinase dkf-1 (722 aa).

2 Phorbol-ester/DAG-type zinc fingers span residues 98 to 148 (PHVV…RNNC) and 186 to 236 (PHTL…ASNC). Residues 279 to 407 (KKLEGWMMHF…QFIKESLQPP (129 aa)) enclose the PH domain. Residues 426-685 (VLSDKTLGSG…IEQCLDHGWL (260 aa)) form the Protein kinase domain. ATP contacts are provided by residues 432–440 (LGSGQFGTV) and lysine 455. Aspartate 551 (proton acceptor) is an active-site residue. Residue threonine 588 is modified to Phosphothreonine.

It belongs to the protein kinase superfamily. CAMK Ser/Thr protein kinase family. PKD subfamily. Mg(2+) is required as a cofactor. Prolonged phosphorylation at Thr-588 results in ubiquitination and degradation. As to expression, highly expressed in embryos and at lower levels through the four larval stages in adults. Present in a region bounded by the anterior and posterior bulbs of the pharynx and an area of the tail containing the lumbar, dorsorectal and pre-anal ganglia. Expressed in neurons.

Its subcellular location is the cytoplasm. The protein localises to the membrane. It carries out the reaction L-seryl-[protein] + ATP = O-phospho-L-seryl-[protein] + ADP + H(+). The catalysed reaction is L-threonyl-[protein] + ATP = O-phospho-L-threonyl-[protein] + ADP + H(+). With respect to regulation, activated by DAG and phorbol esters. Phorbol-ester/DAG-type domain 1 binds phorbol ester with high affinity and mediates accumulation at the cell periphery. Phorbol-ester/DAG-type domain 2 binds phorbol ester with low affinity but may mediate initial contact, resulting in a conformational change allowing previously occluded domain 1 to anchor the kinase. Phosphorylation on Thr-588 is then also required for activation and may also result in a further conformational change. Functionally, converts transient diacylglycerol (DAG) signals into prolonged physiological effects, independently of PKC. Role in the regulation of growth and neuromuscular control of movement. Involved in immune response to S.aureus bacterium by activating transcription factor hlh-30 downstream of phospholipase plc-1. The polypeptide is Serine/threonine-protein kinase dkf-1 (dkf-1) (Caenorhabditis elegans).